A 323-amino-acid polypeptide reads, in one-letter code: Prenyl transferase (323 aa).

Isopentenyl diphosphate-binding residues include K46, R49, and H81. Positions 88 and 92 each coordinate Mg(2+). R97 contributes to the an all-trans-polyprenyl diphosphate binding site. R98 is an isopentenyl diphosphate binding site. An all-trans-polyprenyl diphosphate-binding residues include K174, T175, and Q212.

Belongs to the FPP/GGPP synthase family. The cofactor is Mg(2+).

Possible role in synthesis of the nonaprenyl side chain of plastoquinone or in synthesis of other prenyl chains such as undekaprenyl pyrophosphate. The polypeptide is Prenyl transferase (preA) (Synechocystis sp. (strain ATCC 27184 / PCC 6803 / Kazusa)).